We begin with the raw amino-acid sequence, 207 residues long: Large ribosomal subunit protein uL3 (207 aa).

It belongs to the universal ribosomal protein uL3 family. Part of the 50S ribosomal subunit. Forms a cluster with proteins L14 and L19.

Functionally, one of the primary rRNA binding proteins, it binds directly near the 3'-end of the 23S rRNA, where it nucleates assembly of the 50S subunit. The protein is Large ribosomal subunit protein uL3 of Thermotoga maritima (strain ATCC 43589 / DSM 3109 / JCM 10099 / NBRC 100826 / MSB8).